The sequence spans 508 residues: Non-structural protein 1 (508 aa).

Residues 424–453 (NTESTTTNNAQSPVSDPVNASANVKTSPAG) show a composition bias toward polar residues. The disordered stretch occupies residues 424–464 (NTESTTTNNAQSPVSDPVNASANVKTSPAGTHTDESVMKKE). Residues 455-464 (HTDESVMKKE) show a composition bias toward basic and acidic residues.

The chain is Non-structural protein 1 (Segment-5) from Banna virus (BAV).